Reading from the N-terminus, the 218-residue chain is MRLILLGPPGAGKGTQAAFLTQHYGIPQISTGDMLRAAVKAGTPLGLEAKKVMDAGGLVSDDLIIGLVRDRLTQPDCANGYLFDGFPRTIPQADALKSAGIALDYVVEIEVPESDIIERMSGRRVHPASGRSYHVRFNPPKAEGVDDVTGEPLVQRDDDREETVRHRLNVYQNQTRPLVDYYSSWAQSDAAAAPKYRKISGVGSVDEIKSRLSQALQS.

10 to 15 (GAGKGT) provides a ligand contact to ATP. The interval 30 to 59 (STGDMLRAAVKAGTPLGLEAKKVMDAGGLV) is NMP. AMP contacts are provided by residues Thr-31, Arg-36, 57–59 (GLV), 85–88 (GFPR), and Gln-92. Residues 122 to 159 (GRRVHPASGRSYHVRFNPPKAEGVDDVTGEPLVQRDDD) form an LID region. Residues Arg-123 and 132–133 (SY) each bind ATP. The AMP site is built by Arg-156 and Arg-167. Gly-203 provides a ligand contact to ATP.

It belongs to the adenylate kinase family. As to quaternary structure, monomer.

Its subcellular location is the cytoplasm. The enzyme catalyses AMP + ATP = 2 ADP. It participates in purine metabolism; AMP biosynthesis via salvage pathway; AMP from ADP: step 1/1. Its function is as follows. Catalyzes the reversible transfer of the terminal phosphate group between ATP and AMP. Plays an important role in cellular energy homeostasis and in adenine nucleotide metabolism. This chain is Adenylate kinase, found in Bordetella bronchiseptica (strain ATCC BAA-588 / NCTC 13252 / RB50) (Alcaligenes bronchisepticus).